Consider the following 27-residue polypeptide: CD59 glycoprotein (27 aa).

Cystine bridges form between Cys-3-Cys-25 and Cys-6-Cys-12. An N-linked (GlcNAc...) asparagine glycan is attached at Asn-17.

Interacts with T-cell surface antigen CD2. Post-translationally, N- and O-glycosylated. In terms of tissue distribution, expressed in erythrocytes and lymphocytes. Not detected in platelets.

It localises to the cell membrane. The protein localises to the secreted. Functionally, potent inhibitor of the complement membrane attack complex (MAC) action, which protects self-cells from damage during complement activation. Acts by binding to the beta-haipins of C8 (C8A and C8B) components of the assembling MAC, forming an intermolecular beta-sheet that prevents incorporation of the multiple copies of C9 required for complete formation of the osmolytic pore. This chain is CD59 glycoprotein, found in Ovis aries (Sheep).